We begin with the raw amino-acid sequence, 185 residues long: CASP-like protein 2C2 (185 aa).

At 1–22 (MAAAARVSEVKAEGLLRGACTA) the chain is on the cytoplasmic side. A helical membrane pass occupies residues 23 to 43 (LAAAAALLVGLSTQTETVLLV). At 44-53 (RKKATVKDVQ) the chain is on the extracellular side. The helical transmembrane segment at 54–74 (ALWVLAMAAAAAAGYHLLQLL) threads the bilayer. The Cytoplasmic segment spans residues 75-104 (KCLYLGRVGGARPCRRSSRALAWTCLLLDK). The chain crosses the membrane as a helical span at residues 105-125 (ACAYTTFATTVAAAQACVVAL). The Extracellular segment spans residues 126–146 (DGAHALQWTKLCNIYTRFCEQ). A helical membrane pass occupies residues 147-167 (VAGSLVLGMLAAVGTAVLSAA). Residues 168–185 (SARNVFRHYASLETYAAH) lie on the Cytoplasmic side of the membrane.

This sequence belongs to the Casparian strip membrane proteins (CASP) family. In terms of assembly, homodimer and heterodimers.

It is found in the cell membrane. The protein is CASP-like protein 2C2 of Zea mays (Maize).